Reading from the N-terminus, the 174-residue chain is Glyoxylase I 4 (174 aa).

Positions 13-135 (SLNHVSVLCR…DGFMIEICNC (123 aa)) constitute a VOC domain. Catalysis depends on Glu131, which acts as the Proton donor/acceptor.

The protein belongs to the glyoxalase I family. In terms of tissue distribution, mostly expressed in roots, and, to a lower extent, in leaves, flowers, seeds and siliques.

It is found in the cell membrane. It localises to the cytoplasm. Its function is as follows. Involved in the detoxification and scavenging of methylglyoxal (MG), a cytotoxic aldehyde produced in response to primary metabolism alteration observed during biotic and abiotic stresses. Modulates cross-talk between salicylic acid (SA) and jasmonic acid (JA) signaling pathways during defense responses to pathogens such as Botrytis cinerea. The protein is Glyoxylase I 4 of Arabidopsis thaliana (Mouse-ear cress).